Reading from the N-terminus, the 148-residue chain is MIKEELNLWAEGVEFKHWDAYYNFILSVLNFLCIEEYELSVVLCNNEYIQKLNSAFRQKSEPTDVLSFNYLEENGQINHKIQGDLIISLEYLEFSSLEFNVEMYDELQRNTIHGILHLIGYTHETNDFQNEEMLVIQEKVLRETRRVF.

3 residues coordinate Zn(2+): His-113, His-117, and His-123.

This sequence belongs to the endoribonuclease YbeY family. The cofactor is Zn(2+).

It is found in the cytoplasm. In terms of biological role, single strand-specific metallo-endoribonuclease involved in late-stage 70S ribosome quality control and in maturation of the 3' terminus of the 16S rRNA. This is Endoribonuclease YbeY from Borrelia hermsii (strain HS1 / DAH).